A 321-amino-acid polypeptide reads, in one-letter code: uncharacterized protein (321 aa).

The protein belongs to the NAD(P)-dependent epimerase/dehydratase family.

This is an uncharacterized protein from Staphylococcus aureus (strain bovine RF122 / ET3-1).